A 414-amino-acid chain; its full sequence is Tyrosine--tRNA ligase (414 aa).

Tyr-35 serves as a coordination point for L-tyrosine. A 'HIGH' region motif is present at residues 40–49; the sequence is PTADSLHVGH. L-tyrosine-binding residues include Tyr-164 and Gln-168. The 'KMSKS' region motif lies at 226 to 230; the sequence is KFGKT. Lys-229 contributes to the ATP binding site. Residues 347-414 enclose the S4 RNA-binding domain; the sequence is TKVIDALVEL…KKKYFVILVK (68 aa).

This sequence belongs to the class-I aminoacyl-tRNA synthetase family. TyrS type 1 subfamily. In terms of assembly, homodimer.

The protein resides in the cytoplasm. It carries out the reaction tRNA(Tyr) + L-tyrosine + ATP = L-tyrosyl-tRNA(Tyr) + AMP + diphosphate + H(+). Catalyzes the attachment of tyrosine to tRNA(Tyr) in a two-step reaction: tyrosine is first activated by ATP to form Tyr-AMP and then transferred to the acceptor end of tRNA(Tyr). This Mycoplasma capricolum subsp. capricolum (strain California kid / ATCC 27343 / NCTC 10154) protein is Tyrosine--tRNA ligase.